The following is a 933-amino-acid chain: Progesterone receptor (933 aa).

Residues 1–164 (MTELKAKGPR…PATQGVLSPL (164 aa)) are AF3; mediates transcriptional activation. The segment at 1–256 (MTELKAKGPR…AAAGGGAAAV (256 aa)) is disordered. The interval 1–566 (MTELKAKGPR…YSFESLPQKI (566 aa)) is modulating, Pro-Rich. At Ser20 the chain carries Phosphoserine. The short motif at 55–59 (LDGLL) is the LXXL motif 1 element. A Phosphoserine modification is found at Ser81. An LXXL motif 2 motif is present at residues 115-119 (LDTLL). Phosphoserine is present on residues Ser130 and Ser162. The segment at 165–305 (MSRSGCKAGD…LATTMMDFIH (141 aa)) is mediates transcriptional transrepression. Positions 183–187 (KVLPR) match the Nuclear localization signal motif. Phosphoserine is present on residues Ser190 and Ser213. Residues 220-231 (EVEEEDGSESEE) show a composition bias toward acidic residues. Residues 232–246 (SAGPLLKGKPRALGG) are compositionally biased toward low complexity. Ser294 carries the phosphoserine; by MAPK1 modification. The span at 335–356 (AXSAFAPPRSSPSASSTPVAVG) shows a compositional bias: low complexity. The segment at 335–378 (AXSAFAPPRSSPSASSTPVAVGDFPDCAYPPDAEPKDDAYPLYS) is disordered. Ser345 carries the post-translational modification Phosphoserine; by MAPK. A Glycyl lysine isopeptide (Lys-Gly) (interchain with G-Cter in SUMO); alternate cross-link involves residue Lys388. Residue Lys388 forms a Glycyl lysine isopeptide (Lys-Gly) (interchain with G-Cter in ubiquitin); alternate linkage. Ser400 bears the Phosphoserine; by CDK2 mark. Residues 415 to 452 (PDFPLGPPPPLPPRAPPSRPGEAAVTAAPASASVSSAS) are disordered. Over residues 418–433 (PLGPPPPLPPRAPPSR) the composition is skewed to pro residues. Over residues 434-452 (PGEAAVTAAPASASVSSAS) the composition is skewed to low complexity. The AF1; mediates transcriptional activation stretch occupies residues 456–546 (STLECILYKA…VYPPYLNYLR (91 aa)). Residue Lys531 forms a Glycyl lysine isopeptide (Lys-Gly) (interchain with G-Cter in SUMO) linkage. NR C4-type zinc fingers lie at residues 567 to 587 (CLIC…CGSC) and 603 to 627 (CAGR…LRKC). The segment at residues 567-639 (CLICGDEASG…AGMVLGGRKF (73 aa)) is a DNA-binding region (nuclear receptor). Ser676 is subject to Phosphoserine. An NR LBD domain is found at 679 to 913 (QDIQLIPPLI…EFPEMMSEVI (235 aa)). Positions 687–933 (LINLLMSIEP…MVKPLLFHKK (247 aa)) are AF2; mediates transcriptional activation. Arg766 lines the progesterone pocket.

It belongs to the nuclear hormone receptor family. Interacts with SMARD1 and UNC45A. Interacts with CUEDC2; the interaction promotes ubiquitination, decreases sumoylation, and represses transcriptional activity. Interacts with PIAS3; the interaction promotes sumoylation of PR in a hormone-dependent manner, inhibits DNA-binding, and alters nuclear export. Interacts with SP1; the interaction requires ligand-induced phosphorylation on Ser-345 by ERK1/2-MAPK. Interacts with PRMT2. Interacts with NCOA2 and NCOA1. Interacts with KLF9. Interacts with GTF2B. Post-translationally, phosphorylated on multiple serine sites. Several of these sites are hormone-dependent. Phosphorylation on Ser-294 is highly hormone-dependent and modulates ubiquitination and sumoylation on Lys-388. Phosphorylation on Ser-102 and Ser-345 requires induction by hormone. Basal phosphorylation on Ser-81, Ser-162, Ser-190 and Ser-400 is increased in response to progesterone and can be phosphorylated in vitro by the CDK2-A1 complex. Increased levels of phosphorylation on Ser-400 also in the presence of EGF, heregulin, IGF, PMA and FBS. Phosphorylation at this site by CDK2 is ligand-independent, and increases nuclear translocation and transcriptional activity. Phosphorylation at Ser-162 and Ser-294, but not at Ser-190, is impaired during the G(2)/M phase of the cell cycle. Phosphorylation on Ser-345 by ERK1/2 MAPK is required for interaction with SP1. In terms of processing, sumoylation is hormone-dependent and represses transcriptional activity. Sumoylation on all three sites is enhanced by PIAS3. Desumoylated by SENP1. Sumoylation on Lys-388, the main site of sumoylation, is repressed by ubiquitination on the same site, and modulated by phosphorylation at Ser-294. Ubiquitination is hormone-dependent and represses sumoylation on the same site. Promoted by MAPK-mediated phosphorylation on Ser-294. Ubiquitinated by UBR5, leading to its degradation: UBR5 specifically recognizes and binds ligand-bound PGR when it is not associated with coactivators (NCOAs). In presence of NCOAs, the UBR5-degron is not accessible, preventing its ubiquitination and degradation. Post-translationally, palmitoylated by ZDHHC7 and ZDHHC21. Palmitoylation is required for plasma membrane targeting and for rapid intracellular signaling via ERK and AKT kinases and cAMP generation.

Its subcellular location is the nucleus. The protein localises to the cytoplasm. Functionally, the steroid hormones and their receptors are involved in the regulation of eukaryotic gene expression and affect cellular proliferation and differentiation in target tissues. Transcriptional activator of several progesteron-dependent promoters in a variety of cell types. Involved in activation of SRC-dependent MAPK signaling on hormone stimulation. The protein is Progesterone receptor (PGR) of Pan troglodytes (Chimpanzee).